The sequence spans 205 residues: ESCRT-related protein CHMP1 (205 aa).

Coiled coils occupy residues 13–51 (DLKF…MDGA) and 109–140 (GNLQ…GAMA).

It belongs to the SNF7 family.

It is found in the cytoplasm. It localises to the endosome membrane. In terms of biological role, involved in ESCRT-dependent multivesicular body (MVB) formation and sorting of endosomal cargo proteins into MVBs. This Oryza sativa subsp. japonica (Rice) protein is ESCRT-related protein CHMP1.